A 394-amino-acid chain; its full sequence is Phosphopentomutase (394 aa).

The Mn(2+) site is built by Asp13, Asp286, His291, Asp327, His328, and His339.

Belongs to the phosphopentomutase family. Mn(2+) serves as cofactor.

It is found in the cytoplasm. It carries out the reaction 2-deoxy-alpha-D-ribose 1-phosphate = 2-deoxy-D-ribose 5-phosphate. The enzyme catalyses alpha-D-ribose 1-phosphate = D-ribose 5-phosphate. It participates in carbohydrate degradation; 2-deoxy-D-ribose 1-phosphate degradation; D-glyceraldehyde 3-phosphate and acetaldehyde from 2-deoxy-alpha-D-ribose 1-phosphate: step 1/2. Functionally, isomerase that catalyzes the conversion of deoxy-ribose 1-phosphate (dRib-1-P) and ribose 1-phosphate (Rib-1-P) to deoxy-ribose 5-phosphate (dRib-5-P) and ribose 5-phosphate (Rib-5-P), respectively. This Bacillus mycoides (strain KBAB4) (Bacillus weihenstephanensis) protein is Phosphopentomutase.